The following is a 183-amino-acid chain: Large ribosomal subunit protein uL6 (183 aa).

It belongs to the universal ribosomal protein uL6 family. Part of the 50S ribosomal subunit.

This protein binds to the 23S rRNA, and is important in its secondary structure. It is located near the subunit interface in the base of the L7/L12 stalk, and near the tRNA binding site of the peptidyltransferase center. This chain is Large ribosomal subunit protein uL6, found in Chlamydia muridarum (strain MoPn / Nigg).